Reading from the N-terminus, the 300-residue chain is Cation-efflux pump FieF (300 aa).

A helical membrane pass occupies residues L24–V44. 2 residues coordinate Zn(2+): D45 and D49. The next 2 membrane-spanning stretches (helical) occupy residues A82 to I102 and P114 to F134. The Zn(2+) site is built by H153 and D157. The next 2 membrane-spanning stretches (helical) occupy residues S156–H176 and A178–G198.

This sequence belongs to the cation diffusion facilitator (CDF) transporter (TC 2.A.4) family. FieF subfamily. Homodimer.

The protein resides in the cell inner membrane. It carries out the reaction Zn(2+)(in) + H(+)(out) = Zn(2+)(out) + H(+)(in). The enzyme catalyses Cd(2+)(in) + H(+)(out) = Cd(2+)(out) + H(+)(in). It catalyses the reaction Fe(2+)(in) + H(+)(out) = Fe(2+)(out) + H(+)(in). Its function is as follows. Divalent metal cation transporter which exports Zn(2+), Cd(2+) and possibly Fe(2+). May be involved in zinc and iron detoxification by efflux. The sequence is that of Cation-efflux pump FieF from Salmonella agona (strain SL483).